An 81-amino-acid chain; its full sequence is Sulfur carrier protein TusA (81 aa).

Residue Cys-19 is the Cysteine persulfide intermediate of the active site.

This sequence belongs to the sulfur carrier protein TusA family.

The protein localises to the cytoplasm. Sulfur carrier protein which probably makes part of a sulfur-relay system. In Shewanella frigidimarina (strain NCIMB 400), this protein is Sulfur carrier protein TusA.